A 429-amino-acid polypeptide reads, in one-letter code: MTGKSVKDVDRYQAVLANLLLEEDNKFCADCQSKGPRWASWNIGVFICIRCAGIHRNLGVHISRVKSVNLDQWTQEQIQCMQEMGNGKANRLYEAYLPETFRRPQIDHAVEGFIRDKYEKKKYMDRSLDINAFRKEKDNKWKRGSEPAPEKKMEPVVFEKVKMPQKKEDPQLPRKTSPKSKAPVVDLLGLDAPVSCSIANGKTSNTLEKDLDLLASVSSPSSSVSRKVVGSMPTPGSAGSVPENLNLFPEPGSKSEETSKKQLSKDSILSLYGSQTPQMPTQAMFMAPAQMAYPTAYPSFPGVTPPNSLMGSMMPPPVGMVAQPGASGMVAPMAMPAGYMGGMQASMMGVPNGMMTTQQASYMAGMAAMPQTMYGVQPAQQLQWNLTQMTQQMAGMNFCGTNGMLSYGQSMNGGNGQAANQTLSPQMWK.

In terms of domain architecture, Arf-GAP spans 13-137 (QAVLANLLLE…LDINAFRKEK (125 aa)). The C4-type zinc-finger motif lies at 28-51 (CADCQSKGPRWASWNIGVFICIRC). Phosphoserine is present on S127. The segment covering 138-172 (DNKWKRGSEPAPEKKMEPVVFEKVKMPQKKEDPQL) has biased composition (basic and acidic residues). Disordered stretches follow at residues 138-181 (DNKW…PKSK) and 217-263 (VSSP…KKQL). The interval 163 to 232 (MPQKKEDPQL…SVSRKVVGSM (70 aa)) is interaction with clathrin heavy chains. Over residues 217 to 231 (VSSPSSSVSRKVVGS) the composition is skewed to low complexity. Residues S219, S223, S225, S231, and S240 each carry the phosphoserine modification. The span at 253 to 263 (SKSEETSKKQL) shows a compositional bias: basic and acidic residues. The tract at residues 340 to 429 (MGGMQASMMG…NQTLSPQMWK (90 aa)) is interaction with PICALM.

In terms of assembly, interacts with ARF1. Interacts with PICALM and clathrin heavy chains.

Its subcellular location is the cytoplasm. In terms of biological role, GTPase activating protein that acts on ARF1. Can also activate ARF6 (in vitro). May play a role in clathrin-dependent retrograde transport from early endosomes to the trans-Golgi network. This is Stromal membrane-associated protein 2 (SMAP2) from Bos taurus (Bovine).